A 1460-amino-acid chain; its full sequence is Nonribosomal peptide synthetase 6 (1460 aa).

Residues 63 to 468 (EQAALHPEKI…GRQDQQVKLR (406 aa)) are adenylation. In terms of domain architecture, Carrier 1 spans 600–675 (EPTTEMEIKL…AMATKIKPLS (76 aa)). Residue S636 is modified to O-(pantetheine 4'-phosphoryl)serine. The segment at 712-1135 (VQDVYPCTPL…AVLDPSEAQD (424 aa)) is condensation. Carrier domains lie at 1168–1241 (SPNE…GNEK) and 1236–1312 (SIGN…EETD). O-(pantetheine 4'-phosphoryl)serine is present on residues S1202 and S1273. The segment at 1303–1324 (ELASSAEETDSPQTETNSNAPY) is disordered. Residues 1313 to 1322 (SPQTETNSNA) are compositionally biased toward polar residues.

Belongs to the NRP synthetase family.

It functions in the pathway siderophore biosynthesis. Its function is as follows. NRPS involved in extracellular coprogen-type siderophores biosynthesis. The role of extracellular siderophores in fungal virulence to plants is to supply iron to the fungus during plant infection, but not to act as phytotoxins, depriving their hosts of iron. This is Nonribosomal peptide synthetase 6 from Alternaria brassicicola (Dark leaf spot agent).